We begin with the raw amino-acid sequence, 374 residues long: Chaperone protein DnaJ (374 aa).

A J domain is found at 5 to 70; the sequence is DYYEVLGVNL…RKRASYDQFG (66 aa). Residues 133 to 210 form a CR-type zinc finger; that stretch reads GLSRTIKVPT…CHGQGRQQQT (78 aa). Zn(2+) is bound by residues C146, C149, C162, C165, C184, C187, C198, and C201. CXXCXGXG motif repeat units lie at residues 146–153, 162–169, 184–191, and 198–205; these read CKTCNGSG, CPRCNGSG, CSVCRGRG, and CTDCHGQG.

Belongs to the DnaJ family. Homodimer. Zn(2+) is required as a cofactor.

Its subcellular location is the cytoplasm. Its function is as follows. Participates actively in the response to hyperosmotic and heat shock by preventing the aggregation of stress-denatured proteins and by disaggregating proteins, also in an autonomous, DnaK-independent fashion. Unfolded proteins bind initially to DnaJ; upon interaction with the DnaJ-bound protein, DnaK hydrolyzes its bound ATP, resulting in the formation of a stable complex. GrpE releases ADP from DnaK; ATP binding to DnaK triggers the release of the substrate protein, thus completing the reaction cycle. Several rounds of ATP-dependent interactions between DnaJ, DnaK and GrpE are required for fully efficient folding. Also involved, together with DnaK and GrpE, in the DNA replication of plasmids through activation of initiation proteins. The sequence is that of Chaperone protein DnaJ from Coxiella burnetii (strain RSA 493 / Nine Mile phase I).